Consider the following 300-residue polypeptide: Cis-3-alkyl-4-alkyloxetan-2-one decarboxylase (300 aa).

The region spanning 33-282 is the AB hydrolase-1 domain; sequence VVVMLHGNPS…DDANHYVLED (250 aa).

It belongs to the AB hydrolase superfamily. In terms of assembly, homotetramer. Forms a complex with OleC and OleD.

Its subcellular location is the cytoplasm. It carries out the reaction a cis-3-alkyl-4-alkyloxetan-2-one = a cis-alkene + CO2. In terms of biological role, involved in olefin biosynthesis. Catalyzes the elimination of carbon dioxide from beta-lactones to form the final olefin product. The chain is Cis-3-alkyl-4-alkyloxetan-2-one decarboxylase from Xanthomonas campestris pv. campestris (strain ATCC 33913 / DSM 3586 / NCPPB 528 / LMG 568 / P 25).